The primary structure comprises 621 residues: tRNA uridine 5-carboxymethylaminomethyl modification enzyme MnmG (621 aa).

Position 9 to 14 (9 to 14) interacts with FAD; that stretch reads GGGHAG. Position 268–282 (268–282) interacts with NAD(+); the sequence is GPRYCPSIEDKINRF.

Belongs to the MnmG family. As to quaternary structure, homodimer. Heterotetramer of two MnmE and two MnmG subunits. FAD is required as a cofactor.

The protein resides in the cytoplasm. NAD-binding protein involved in the addition of a carboxymethylaminomethyl (cmnm) group at the wobble position (U34) of certain tRNAs, forming tRNA-cmnm(5)s(2)U34. This Campylobacter fetus subsp. fetus (strain 82-40) protein is tRNA uridine 5-carboxymethylaminomethyl modification enzyme MnmG.